The following is a 337-amino-acid chain: Glyceraldehyde-3-phosphate dehydrogenase 1, cytosolic (337 aa).

Residues 13-14 (RI), Asp35, and Arg82 contribute to the NAD(+) site. D-glyceraldehyde 3-phosphate-binding positions include 153-155 (SCT), Thr184, 213-214 (TG), and Arg236. The active-site Nucleophile is the Cys154. Asn318 is an NAD(+) binding site.

Belongs to the glyceraldehyde-3-phosphate dehydrogenase family. In terms of assembly, homotetramer. In terms of processing, phosphorylated after gibberellin treatment.

It localises to the cytoplasm. The enzyme catalyses D-glyceraldehyde 3-phosphate + phosphate + NAD(+) = (2R)-3-phospho-glyceroyl phosphate + NADH + H(+). It participates in carbohydrate degradation; glycolysis; pyruvate from D-glyceraldehyde 3-phosphate: step 1/5. Its function is as follows. Key enzyme in glycolysis that catalyzes the first step of the pathway by converting D-glyceraldehyde 3-phosphate (G3P) into 3-phospho-D-glyceroyl phosphate. Essential for the maintenance of cellular ATP levels and carbohydrate metabolism. The protein is Glyceraldehyde-3-phosphate dehydrogenase 1, cytosolic (GAPC1) of Oryza sativa subsp. japonica (Rice).